Here is a 93-residue protein sequence, read N- to C-terminus: Chaperone NapD (93 aa).

This sequence belongs to the NapD family. In terms of assembly, interacts with the cytoplasmic NapA precursor.

It localises to the cytoplasm. Its function is as follows. Chaperone for NapA, the catalytic subunit of the periplasmic nitrate reductase. It binds directly and specifically to the twin-arginine signal peptide of NapA, preventing premature interaction with the Tat translocase and premature export. The sequence is that of Chaperone NapD from Haemophilus influenzae (strain ATCC 51907 / DSM 11121 / KW20 / Rd).